Here is a 297-residue protein sequence, read N- to C-terminus: Virulence genes transcriptional activator (297 aa).

The 61-residue stretch at 1–61 (MDFLINKKLK…IRKNGTLIPT (61 aa)) folds into the HTH lysR-type domain. A DNA-binding region (H-T-H motif) is located at residues 21 to 40 (FSIATSVLYITRTPLSRVIS).

It belongs to the LysR transcriptional regulatory family.

It is found in the cytoplasm. Positive regulator for the plasmid-encoded virulence factors SpvA, SpvB, and SpvC. This is Virulence genes transcriptional activator (mkaC) from Salmonella typhimurium (strain LT2 / SGSC1412 / ATCC 700720).